The primary structure comprises 178 residues: Bifunctional protein PyrR (178 aa).

Positions 99–111 match the PRPP-binding motif; that stretch reads VILVDDVLFTGRT.

This sequence belongs to the purine/pyrimidine phosphoribosyltransferase family. PyrR subfamily. As to quaternary structure, homodimer and homohexamer; in equilibrium.

The enzyme catalyses UMP + diphosphate = 5-phospho-alpha-D-ribose 1-diphosphate + uracil. Functionally, regulates transcriptional attenuation of the pyrimidine nucleotide (pyr) operon by binding in a uridine-dependent manner to specific sites on pyr mRNA. This disrupts an antiterminator hairpin in the RNA and favors formation of a downstream transcription terminator, leading to a reduced expression of downstream genes. Its function is as follows. Also displays a weak uracil phosphoribosyltransferase activity which is not physiologically significant. This is Bifunctional protein PyrR from Limosilactobacillus reuteri subsp. reuteri (strain JCM 1112) (Lactobacillus reuteri).